The primary structure comprises 325 residues: tRNA(Ile)-lysidine synthase (325 aa).

35-40 (SGGQDS) lines the ATP pocket.

The protein belongs to the tRNA(Ile)-lysidine synthase family.

Its subcellular location is the cytoplasm. It carries out the reaction cytidine(34) in tRNA(Ile2) + L-lysine + ATP = lysidine(34) in tRNA(Ile2) + AMP + diphosphate + H(+). Functionally, ligates lysine onto the cytidine present at position 34 of the AUA codon-specific tRNA(Ile) that contains the anticodon CAU, in an ATP-dependent manner. Cytidine is converted to lysidine, thus changing the amino acid specificity of the tRNA from methionine to isoleucine. This Gloeobacter violaceus (strain ATCC 29082 / PCC 7421) protein is tRNA(Ile)-lysidine synthase.